A 215-amino-acid chain; its full sequence is MAVSVKICGLTEAAGLAAAVDAGARYVGFVFFPKSPRHVTPGTAAELAAQVPLGVAKVGLFVNPDDAALDAVLAHVPLDVIQLHGAETPARVAEVKARTGLPVMKAVGVADPQDLDALWDYGLVADMLLIDAKPPKDAVLPGGNGLAFDWRLLAGRQILKPWLLAGGLTPENVHEAIRLTRAPGVDVSSGVESAPGVKDPDRIRSFIARATAPIL.

It belongs to the TrpF family.

The enzyme catalyses N-(5-phospho-beta-D-ribosyl)anthranilate = 1-(2-carboxyphenylamino)-1-deoxy-D-ribulose 5-phosphate. The protein operates within amino-acid biosynthesis; L-tryptophan biosynthesis; L-tryptophan from chorismate: step 3/5. In Paracoccus denitrificans (strain Pd 1222), this protein is N-(5'-phosphoribosyl)anthranilate isomerase.